The primary structure comprises 170 residues: Putative pre-16S rRNA nuclease (170 aa).

Positions 1–25 are disordered; it reads MVPAQHRPPDRPGDPAHDPGRGRRL. Residues 7-21 are compositionally biased toward basic and acidic residues; that stretch reads RPPDRPGDPAHDPGR.

This sequence belongs to the YqgF nuclease family.

The protein resides in the cytoplasm. Functionally, could be a nuclease involved in processing of the 5'-end of pre-16S rRNA. This is Putative pre-16S rRNA nuclease from Mycobacterium tuberculosis (strain ATCC 25177 / H37Ra).